The primary structure comprises 171 residues: Galectin-related protein (171 aa).

The Galectin domain maps to 38–170; it reads PFCGHIKGGM…INGDLQLTKL (133 aa).

In terms of biological role, does not bind lactose, and may not bind carbohydrates. The polypeptide is Galectin-related protein (lgalsl) (Xenopus tropicalis (Western clawed frog)).